Here is a 548-residue protein sequence, read N- to C-terminus: Chaperonin GroEL 2 (548 aa).

ATP is bound by residues 29–32 (TLGP), 86–90 (DGTTT), Gly-418, 482–484 (NAA), and Asp-498.

This sequence belongs to the chaperonin (HSP60) family. Forms a cylinder of 14 subunits composed of two heptameric rings stacked back-to-back. Interacts with the co-chaperonin GroES.

It localises to the cytoplasm. The enzyme catalyses ATP + H2O + a folded polypeptide = ADP + phosphate + an unfolded polypeptide.. Its function is as follows. Together with its co-chaperonin GroES, plays an essential role in assisting protein folding. The GroEL-GroES system forms a nano-cage that allows encapsulation of the non-native substrate proteins and provides a physical environment optimized to promote and accelerate protein folding. This is Chaperonin GroEL 2 from Corynebacterium glutamicum (strain ATCC 13032 / DSM 20300 / JCM 1318 / BCRC 11384 / CCUG 27702 / LMG 3730 / NBRC 12168 / NCIMB 10025 / NRRL B-2784 / 534).